A 95-amino-acid chain; its full sequence is Co-chaperonin GroES (95 aa).

It belongs to the GroES chaperonin family. As to quaternary structure, heptamer of 7 subunits arranged in a ring. Interacts with the chaperonin GroEL.

Its subcellular location is the cytoplasm. In terms of biological role, together with the chaperonin GroEL, plays an essential role in assisting protein folding. The GroEL-GroES system forms a nano-cage that allows encapsulation of the non-native substrate proteins and provides a physical environment optimized to promote and accelerate protein folding. GroES binds to the apical surface of the GroEL ring, thereby capping the opening of the GroEL channel. This chain is Co-chaperonin GroES, found in Stenotrophomonas maltophilia (strain K279a).